We begin with the raw amino-acid sequence, 610 residues long: Sodium-coupled monocarboxylate transporter 1 (610 aa).

Over 1-9 (MDTPRGIGT) the chain is Extracellular. The helical transmembrane segment at 10-30 (FVVWDYVVFAGMLVISAAIGI) threads the bilayer. The Cytoplasmic segment spans residues 31–51 (YYAFAGGGQQTSKDFLMGGRR). A helical membrane pass occupies residues 52 to 72 (MTAVPVALSLTASFMSAVTVL). Residues 73 to 83 (GTPSEVYRFGA) are Extracellular-facing. Residues 84 to 104 (IFSIFAFTYFFVVVISAEVFL) form a helical membrane-spanning segment. Over 105-132 (PVFYKLGITSTYEYLELRFNKCVRLCGT) the chain is Cytoplasmic. The chain crosses the membrane as a helical span at residues 133–153 (VLFIVQTILYTGIVIYAPALA). The Extracellular portion of the chain corresponds to 154–161 (LNQVTGFD). The chain crosses the membrane as a helical span at residues 162–182 (LWGAVVATGVVCTFYCTLGGL). At 183–189 (KAVIWTD) the chain is on the cytoplasmic side. Residues 190 to 210 (VFQVGIMVAGFASVIIQAVVM) traverse the membrane as a helical segment. Over 211–239 (QGGISTILNDAYDGGRLNFWNFNPNPLQR) the chain is Extracellular. A helical membrane pass occupies residues 240–260 (HTFWTIIIGGTFTWTSIYGVN). The Cytoplasmic segment spans residues 261–279 (QSQVQRYISCKSRFQAKLS). Residues 280-300 (LYINLVGLWAILTCSVFCGLA) form a helical membrane-spanning segment. At 301–336 (LYSRYHDCDPWTAKKVSAPDQLMPYLVLDILQDYPG) the chain is on the extracellular side. The chain crosses the membrane as a helical span at residues 337–359 (LPGLFVACAYSGTLSTVSSSINA). The Cytoplasmic portion of the chain corresponds to 360-389 (LAAVTVEDLIKPYFRSLSERSLSWISQGMS). The chain crosses the membrane as a helical span at residues 390 to 410 (VVYGALCIGMAALASLMGALL). Residues 411 to 415 (QAALS) are Extracellular-facing. A helical transmembrane segment spans residues 416–436 (VFGMVGGPLMGLFALGILVPF). Over 437–439 (ANS) the chain is Cytoplasmic. A helical transmembrane segment spans residues 440 to 460 (IGALVGLMAGFAISLWVGIGA). Residues 461–518 (QIYPPLPERTLPLHLDIQGCNSTYNETNLMTTTEMPFTTSVFQIYNVQRTPLMDNWYS) are Extracellular-facing. Residue N485 is glycosylated (N-linked (GlcNAc...) asparagine). A helical membrane pass occupies residues 519–539 (LSYLYFSTVGTLVTLLVGILV). At 540-610 (SLSTGGRKQN…QSGKSNGTRL (71 aa)) the chain is on the cytoplasmic side. Positions 585 to 610 (GGTDNPAFNHIELNSDQSGKSNGTRL) are disordered. Polar residues predominate over residues 596–610 (ELNSDQSGKSNGTRL). The PDZ-binding motif lies at 608–610 (TRL).

The protein belongs to the sodium:solute symporter (SSF) (TC 2.A.21) family. In terms of assembly, interacts (via PDZ-binding motif) with PDZK1 (via PDZ domains 1 and 3); interaction increases nicotinate transport activity of SLC5A8. In terms of tissue distribution, expressed in normal thyroid, localized at the apical pole of thyroid cells facing the colloid lumen, but expression profoundly decreased in thyroid carcinomas. Expressed in normal colon but absent in colon aberrant crypt foci and colon cancers. Present in normal kidney cortex, brain, prostate, gastric mucosa and breast tissue but was significantly down-regulated in primary gliomas, gastric cancer, prostate tumors and breast tumors.

The protein localises to the apical cell membrane. The catalysed reaction is (S)-lactate(out) + 2 Na(+)(out) = (S)-lactate(in) + 2 Na(+)(in). It carries out the reaction propanoate(out) + 2 Na(+)(out) = propanoate(in) + 2 Na(+)(in). The enzyme catalyses pyruvate(out) + 2 Na(+)(out) = pyruvate(in) + 2 Na(+)(in). It catalyses the reaction acetate(out) + 2 Na(+)(out) = acetate(in) + 2 Na(+)(in). The catalysed reaction is butanoate(out) + 2 Na(+)(out) = butanoate(in) + 2 Na(+)(in). It carries out the reaction nicotinate(out) + 2 Na(+)(out) = nicotinate(in) + 2 Na(+)(in). The enzyme catalyses (R)-3-hydroxybutanoate(out) + 2 Na(+)(out) = (R)-3-hydroxybutanoate(in) + 2 Na(+)(in). It catalyses the reaction acetoacetate(out) + 2 Na(+)(out) = acetoacetate(in) + 2 Na(+)(in). The catalysed reaction is 4-methyl-2-oxopentanoate(out) + 2 Na(+)(out) = 4-methyl-2-oxopentanoate(in) + 2 Na(+)(in). It carries out the reaction 5-oxo-L-proline(out) + 2 Na(+)(out) = 5-oxo-L-proline(in) + 2 Na(+)(in). The enzyme catalyses iodide(out) = iodide(in). It catalyses the reaction chloride(in) = chloride(out). The catalysed reaction is nitrate(in) = nitrate(out). It carries out the reaction bromide(in) = bromide(out). Its activity is regulated as follows. Increase of iodide influx inhibited by addition of perchlorate (NaClO(4)), a competitive inhibitor of iodide uptake catalyzed by sodium iodide symporter (NIS). Cotransport of monocarboxylates and nicotinate strongly inhibited by probenecid, nonsteroid anti-inflammatory drugs (ibuprofen, fenoprofen, ketprofen, naproxen) in a Na(+)-dependent manner or by prolonged exposure to external concentrations of monocarboxylates. Acts as an electrogenic sodium (Na(+)) and chloride (Cl-)-dependent sodium-coupled solute transporter, including transport of monocarboxylates (short-chain fatty acids including L-lactate, D-lactate, pyruvate, acetate, propionate, valerate and butyrate), mocarboxylate drugs (nicotinate, benzoate, salicylate and 5-aminosalicylate) and ketone bodies (beta-D-hydroxybutyrate, acetoacetate and alpha-ketoisocaproate), with a Na(+):substrate stoichiometry of between 4:1 and 2:1. Catalyzes passive carrier mediated diffusion of iodide. Mediates iodide transport from the thyrocyte into the colloid lumen through the apical membrane. May be responsible for the absorption of D-lactate and monocarboxylate drugs from the intestinal tract. Acts as a tumor suppressor, suppressing colony formation in colon cancer, prostate cancer and glioma cell lines. May play a critical role in the entry of L-lactate and ketone bodies into neurons by a process driven by an electrochemical Na(+) gradient and hence contribute to the maintenance of the energy status and function of neurons. Mediates sodium-coupled electrogenic transport of pyroglutamate (5-oxo-L-proline). Can mediate the transport of chloride, bromide, iodide and nitrate ions when the external concentration of sodium ions is reduced. The sequence is that of Sodium-coupled monocarboxylate transporter 1 from Homo sapiens (Human).